The chain runs to 68 residues: ATP synthase F(0) complex subunit 8 (68 aa).

Residues 8–24 traverse the membrane as a helical segment; sequence VWPTMIAPMLLTLFLIT. Lysine 54 is modified (N6-acetyllysine; alternate). Lysine 54 carries the post-translational modification N6-succinyllysine; alternate. N6-acetyllysine is present on lysine 57.

Belongs to the ATPase protein 8 family. As to quaternary structure, component of the ATP synthase complex composed at least of ATP5F1A/subunit alpha, ATP5F1B/subunit beta, ATP5MC1/subunit c (homooctomer), MT-ATP6/subunit a, MT-ATP8/subunit 8, ATP5ME/subunit e, ATP5MF/subunit f, ATP5MG/subunit g, ATP5MK/subunit k, ATP5MJ/subunit j, ATP5F1C/subunit gamma, ATP5F1D/subunit delta, ATP5F1E/subunit epsilon, ATP5PF/subunit F6, ATP5PB/subunit b, ATP5PD/subunit d, ATP5PO/subunit OSCP. ATP synthase complex consists of a soluble F(1) head domain (subunits alpha(3) and beta(3)) - the catalytic core - and a membrane F(0) domain - the membrane proton channel (subunits c, a, 8, e, f, g, k and j). These two domains are linked by a central stalk (subunits gamma, delta, and epsilon) rotating inside the F1 region and a stationary peripheral stalk (subunits F6, b, d, and OSCP). Interacts with PRICKLE3.

The protein resides in the mitochondrion membrane. Subunit 8, of the mitochondrial membrane ATP synthase complex (F(1)F(0) ATP synthase or Complex V) that produces ATP from ADP in the presence of a proton gradient across the membrane which is generated by electron transport complexes of the respiratory chain. ATP synthase complex consist of a soluble F(1) head domain - the catalytic core - and a membrane F(1) domain - the membrane proton channel. These two domains are linked by a central stalk rotating inside the F(1) region and a stationary peripheral stalk. During catalysis, ATP synthesis in the catalytic domain of F(1) is coupled via a rotary mechanism of the central stalk subunits to proton translocation. In vivo, can only synthesize ATP although its ATP hydrolase activity can be activated artificially in vitro. Part of the complex F(0) domain. This Gorilla gorilla gorilla (Western lowland gorilla) protein is ATP synthase F(0) complex subunit 8.